We begin with the raw amino-acid sequence, 57 residues long: Ribosome modulation factor (57 aa).

The interval 1–28 (MKRQKRDRLERAQSQGYKAGLNGRSHDE) is disordered.

This sequence belongs to the ribosome modulation factor family.

It localises to the cytoplasm. Its function is as follows. During stationary phase, converts 70S ribosomes to an inactive dimeric form (100S ribosomes). This Vibrio cholerae serotype O1 (strain MJ-1236) protein is Ribosome modulation factor.